Consider the following 251-residue polypeptide: Hydroxyacylglutathione hydrolase (251 aa).

Residues His58, His60, Asp62, His63, His116, Asp135, and His173 each contribute to the Zn(2+) site.

The protein belongs to the metallo-beta-lactamase superfamily. Glyoxalase II family. Monomer. The cofactor is Zn(2+).

It carries out the reaction an S-(2-hydroxyacyl)glutathione + H2O = a 2-hydroxy carboxylate + glutathione + H(+). The protein operates within secondary metabolite metabolism; methylglyoxal degradation; (R)-lactate from methylglyoxal: step 2/2. Thiolesterase that catalyzes the hydrolysis of S-D-lactoyl-glutathione to form glutathione and D-lactic acid. The chain is Hydroxyacylglutathione hydrolase from Bdellovibrio bacteriovorus (strain ATCC 15356 / DSM 50701 / NCIMB 9529 / HD100).